Here is a 795-residue protein sequence, read N- to C-terminus: Cyclin-dependent kinase 11B (795 aa).

Positions 17-60 (LQEKKRRKEQEEKAEIKRLKNSDDRDSKRDSLEEGELRDHRMEI) are enriched in basic and acidic residues. The segment at 17 to 412 (LQEKKRRKEQ…EGDYVPDSPA (396 aa)) is disordered. Residues S47 and S72 each carry the phosphoserine modification. The span at 95 to 113 (EKAHHRKDEKRKEKRRHRS) shows a compositional bias: basic residues. 4 stretches are compositionally biased toward basic and acidic residues: residues 114-131 (HSAE…EREH), 138-227 (REEQ…DKVK), 238-253 (PPRE…KPGE), and 264-276 (QLKE…RDLL). A Phosphoserine modification is found at S115. S283 carries the post-translational modification Phosphoserine. The span at 291–302 (SAESSSAESGSG) shows a compositional bias: low complexity. Composition is skewed to acidic residues over residues 303–364 (SEEE…EERE) and 383–392 (ESEEAEEEVG). A Protein kinase domain is found at 438–723 (FQCLNRIEEG…AEDGLKHEYF (286 aa)). Residues 444 to 452 (IEEGTYGVV) and K467 contribute to the ATP site. S482 bears the Phosphoserine; by CDK7 mark. Residue T488 is modified to Phosphothreonine; by CDK7. D562 functions as the Proton acceptor in the catalytic mechanism. S589 carries the post-translational modification Phosphoserine. Residue Y594 is modified to Phosphotyrosine. Phosphothreonine is present on T595. K641 is covalently cross-linked (Glycyl lysine isopeptide (Lys-Gly) (interchain with G-Cter in SUMO2)). Positions 733–795 (SMFPTWPAKS…AAGPGFSLKF (63 aa)) are disordered. T751 is subject to Phosphothreonine. At S752 the chain carries Phosphoserine.

Belongs to the protein kinase superfamily. CMGC Ser/Thr protein kinase family. CDC2/CDKX subfamily. As to quaternary structure, cleaved isoform SV9 (p110C) binds to the serine/threonine kinase PAK1 and RANBP9. p110C interacts with RNPS1. Isoform 7, but not isoform SV9, nor its cleavage product p110C, interacts with CCND3. Interacts with CCNL1 and CCNL2. Forms complexes with pre-mRNA-splicing factors, including at least SRSF1, SRSF2 and SRSF7/SLU7. Interacts with isoform 5 of MYO18A. (Microbial infection) Interacts with human herpes virus 1 (HHV-1) transcriptional regulator ICP22. Mg(2+) is required as a cofactor. During FAS- or TNF-induced apoptosis, isoform SV9 is cleaved by caspases to produce p110C, a fragment that contains the C-terminal kinase domain. In terms of processing, phosphorylation at Ser-115 creates a binding site for 14-3-3 proteins. p110C can be autophosphorylated. In terms of tissue distribution, expressed ubiquitously. Some evidence of isoform-specific tissue distribution.

The protein localises to the cytoplasm. It is found in the nucleus. The catalysed reaction is L-seryl-[protein] + ATP = O-phospho-L-seryl-[protein] + ADP + H(+). It catalyses the reaction L-threonyl-[protein] + ATP = O-phospho-L-threonyl-[protein] + ADP + H(+). With respect to regulation, phosphorylation at Thr-448 or Tyr-449 inactivates the enzyme, while phosphorylation at Thr-595 activates it. Its function is as follows. Plays multiple roles in cell cycle progression, cytokinesis and apoptosis. Involved in pre-mRNA splicing in a kinase activity-dependent manner. Isoform 7 may act as a negative regulator of normal cell cycle progression. The protein is Cyclin-dependent kinase 11B (CDK11B) of Homo sapiens (Human).